The following is a 380-amino-acid chain: L-lactate dehydrogenase (380 aa).

Positions 1–380 constitute an FMN hydroxy acid dehydrogenase domain; that stretch reads MIISSASDYR…DASILVKAVA (380 aa). Residue Tyr24 participates in substrate binding. Residues Ser106 and Gln127 each contribute to the FMN site. Position 129 (Tyr129) interacts with substrate. Residue Thr155 participates in FMN binding. Arg164 serves as a coordination point for substrate. Lys251 lines the FMN pocket. Residue His275 is the Proton acceptor of the active site. Arg278 contacts substrate. Residue 306–330 participates in FMN binding; that stretch reads DSGIRSGLDVVRMLALGAKGVLLGR.

This sequence belongs to the FMN-dependent alpha-hydroxy acid dehydrogenase family. Homotetramer. The cofactor is FMN.

The protein resides in the cell inner membrane. The enzyme catalyses (S)-lactate + A = pyruvate + AH2. Its function is as follows. Catalyzes the conversion of L-lactate to pyruvate. Is coupled to the respiratory chain. This chain is L-lactate dehydrogenase, found in Pseudomonas syringae pv. syringae (strain B728a).